Reading from the N-terminus, the 366-residue chain is Histidinol-phosphate aminotransferase 2 (366 aa).

Residues methionine 1–glutamine 11 show a composition bias toward polar residues. The disordered stretch occupies residues methionine 1–glutamine 21. The residue at position 222 (lysine 222) is an N6-(pyridoxal phosphate)lysine.

Belongs to the class-II pyridoxal-phosphate-dependent aminotransferase family. Histidinol-phosphate aminotransferase subfamily. Homodimer. Requires pyridoxal 5'-phosphate as cofactor.

The catalysed reaction is L-histidinol phosphate + 2-oxoglutarate = 3-(imidazol-4-yl)-2-oxopropyl phosphate + L-glutamate. Its pathway is amino-acid biosynthesis; L-histidine biosynthesis; L-histidine from 5-phospho-alpha-D-ribose 1-diphosphate: step 7/9. This Bacillus thuringiensis subsp. konkukian (strain 97-27) protein is Histidinol-phosphate aminotransferase 2.